A 788-amino-acid polypeptide reads, in one-letter code: Cell division cycle protein 27 homolog (788 aa).

Positions 198–436 are disordered; sequence YLDSPASSLK…PLPSVASSLN (239 aa). Positions 217–229 are enriched in low complexity; it reads GPSSSSAASTAEP. Polar residues-rich tracts occupy residues 241–273, 293–303, and 319–360; these read RGTI…SRIN, SSVTGSRSSLF, and NRAN…NPVR. A compositionally biased stretch (low complexity) spans 366–378; that stretch reads ADAAAAANKTAKT. The segment covering 391–414 has biased composition (polar residues); it reads VSRNSNLARSLSGSTNSVASTASE. TPR repeat units follow at residues 561–594, 596–628, 629–662, 664–696, and 731–764; these read PQSW…DKRF, YAYT…SPRD, YRAW…NPTN, AMLC…NPLD, and AFIF…DPRG.

It belongs to the APC3/CDC27 family. As to quaternary structure, the APC/C complex is probably composed of at least 12 subunits: apc-2, apc-10, apc-11, cdc-26, emb-1, emb-27, emb-30, mat-1, mat-2, mat-3, such-1 and gfi-3. Expressed in the ventral nerve cord.

The protein resides in the nucleus. It participates in protein modification; protein ubiquitination. Functionally, probable component of the anaphase promoting complex/cyclosome (APC/C), a cell cycle-regulated E3 ubiquitin ligase that controls progression through mitosis and the G1 phase of the cell cycle. The APC/C complex acts by mediating ubiquitination and subsequent degradation of target proteins. Developmental role in early embryogenesis and the metaphase to anaphase transition in oocyte and spermatocyte meiosis and mitosis in germ cells. Required for embryonic anterior-posterior axis formation. Plays a role in regulating the abundance of glr-1 receptors in postmitotic neurons, which may in turn control animal locomotion. In Caenorhabditis elegans, this protein is Cell division cycle protein 27 homolog.